The chain runs to 412 residues: Serine hydroxymethyltransferase (412 aa).

Residues L117 and 121–123 contribute to the (6S)-5,6,7,8-tetrahydrofolate site; that span reads GHL. K226 is subject to N6-(pyridoxal phosphate)lysine. (6S)-5,6,7,8-tetrahydrofolate is bound by residues E242 and 350-352; that span reads SPF.

This sequence belongs to the SHMT family. As to quaternary structure, homodimer. It depends on pyridoxal 5'-phosphate as a cofactor.

Its subcellular location is the cytoplasm. The catalysed reaction is (6R)-5,10-methylene-5,6,7,8-tetrahydrofolate + glycine + H2O = (6S)-5,6,7,8-tetrahydrofolate + L-serine. Its pathway is one-carbon metabolism; tetrahydrofolate interconversion. It participates in amino-acid biosynthesis; glycine biosynthesis; glycine from L-serine: step 1/1. Functionally, catalyzes the reversible interconversion of serine and glycine with tetrahydrofolate (THF) serving as the one-carbon carrier. Also exhibits THF-independent aldolase activity toward beta-hydroxyamino acids, producing glycine and aldehydes, via a retro-aldol mechanism. The chain is Serine hydroxymethyltransferase from Methanosarcina acetivorans (strain ATCC 35395 / DSM 2834 / JCM 12185 / C2A).